We begin with the raw amino-acid sequence, 273 residues long: Putative deoxyribonuclease TATDN1 homolog (273 aa).

Residues Glu-91, His-125, His-147, and Asp-195 each contribute to the a divalent metal cation site.

Belongs to the metallo-dependent hydrolases superfamily. TatD-type hydrolase family. A divalent metal cation is required as a cofactor.

It localises to the nucleus. In terms of biological role, putative deoxyribonuclease. The chain is Putative deoxyribonuclease TATDN1 homolog from Encephalitozoon cuniculi (strain GB-M1) (Microsporidian parasite).